Here is a 1067-residue protein sequence, read N- to C-terminus: Probable importin-5 homolog (1067 aa).

HEAT repeat units follow at residues 3 to 34 (LQPI…YKNH), 42 to 75 (SFIV…SGNI), 93 to 120 (FAVR…QLVP), 125 to 152 (PEIL…LIGA), 164 to 197 (APHF…STFI), 206 to 243 (VFKP…IAQY), 251 to 286 (NFDM…FAEF), 295 to 347 (LYLE…HCVS), 349 to 381 (GLWE…SSIS), 385 to 425 (EKQI…ASYL), 427 to 466 (REMQ…LDEI), 468 to 508 (PNRV…VDGI), 510 to 553 (EEFT…GLAV), 555 to 596 (KKVF…AQCL), 598 to 658 (EDFI…AMEL), 661 to 703 (HLFP…SKQH), 718 to 757 (FTSR…MDIG), 763 to 826 (ADRI…CIQF), 832 to 869 (PYIA…ENGG), 876 to 909 (YPHI…AAEN), 917 to 960 (FLME…ITNL), 969 to 999 (PQTI…TLIR), 1008 to 1040 (QQYI…LALR), and 1041 to 1064 (SQES…LANF).

It belongs to the importin beta family. Importin beta-3 subfamily.

Its subcellular location is the cytoplasm. It localises to the nucleus. Its function is as follows. Functions in nuclear protein import as nuclear transport receptor. Serves as receptor for nuclear localization signals (NLS) in cargo substrates. The protein is Probable importin-5 homolog of Dictyostelium discoideum (Social amoeba).